Consider the following 549-residue polypeptide: Speedy protein E3 (549 aa).

Residues 1 to 15 (MTSHQPQPQEEQSPQ) show a composition bias toward low complexity. Disordered regions lie at residues 1–74 (MTSH…EPEE), 126–145 (KREC…APEP), 188–218 (SPPR…APEP), 261–291 (SPPR…APEP), and 334–364 (SPPR…APEP). 5 stretches are compositionally biased toward acidic residues: residues 58–74 (DESD…EPEE), 131–145 (DESD…APEP), 204–218 (DESD…APEP), 277–291 (DESD…APEP), and 350–364 (DESD…APEP).

The protein belongs to the Speedy/Ringo family. Predominantly expressed in testis and spleen.

This is Speedy protein E3 from Homo sapiens (Human).